Consider the following 343-residue polypeptide: S-adenosylmethionine:tRNA ribosyltransferase-isomerase (343 aa).

It belongs to the QueA family. In terms of assembly, monomer.

The protein resides in the cytoplasm. It carries out the reaction 7-aminomethyl-7-carbaguanosine(34) in tRNA + S-adenosyl-L-methionine = epoxyqueuosine(34) in tRNA + adenine + L-methionine + 2 H(+). It functions in the pathway tRNA modification; tRNA-queuosine biosynthesis. Transfers and isomerizes the ribose moiety from AdoMet to the 7-aminomethyl group of 7-deazaguanine (preQ1-tRNA) to give epoxyqueuosine (oQ-tRNA). In Stenotrophomonas maltophilia (strain R551-3), this protein is S-adenosylmethionine:tRNA ribosyltransferase-isomerase.